Reading from the N-terminus, the 373-residue chain is DNA replication and repair protein RecF (373 aa).

30-37 (GENAQGKT) provides a ligand contact to ATP.

Belongs to the RecF family.

It localises to the cytoplasm. Functionally, the RecF protein is involved in DNA metabolism; it is required for DNA replication and normal SOS inducibility. RecF binds preferentially to single-stranded, linear DNA. It also seems to bind ATP. This Bacillus cytotoxicus (strain DSM 22905 / CIP 110041 / 391-98 / NVH 391-98) protein is DNA replication and repair protein RecF.